The sequence spans 194 residues: ATP-dependent Clp protease proteolytic subunit (194 aa).

Residue Ser98 is the Nucleophile of the active site. Residue His123 is part of the active site.

It belongs to the peptidase S14 family. Fourteen ClpP subunits assemble into 2 heptameric rings which stack back to back to give a disk-like structure with a central cavity, resembling the structure of eukaryotic proteasomes.

Its subcellular location is the cytoplasm. It catalyses the reaction Hydrolysis of proteins to small peptides in the presence of ATP and magnesium. alpha-casein is the usual test substrate. In the absence of ATP, only oligopeptides shorter than five residues are hydrolyzed (such as succinyl-Leu-Tyr-|-NHMec, and Leu-Tyr-Leu-|-Tyr-Trp, in which cleavage of the -Tyr-|-Leu- and -Tyr-|-Trp bonds also occurs).. Functionally, cleaves peptides in various proteins in a process that requires ATP hydrolysis. Has a chymotrypsin-like activity. Plays a major role in the degradation of misfolded proteins. The polypeptide is ATP-dependent Clp protease proteolytic subunit (Clostridium botulinum (strain Hall / ATCC 3502 / NCTC 13319 / Type A)).